A 295-amino-acid polypeptide reads, in one-letter code: Ethanolamine ammonia-lyase small subunit (295 aa).

Adenosylcob(III)alamin is bound by residues V207, E228, and C258.

It belongs to the EutC family. In terms of assembly, the basic unit is a heterodimer which dimerizes to form tetramers. The heterotetramers trimerize; 6 large subunits form a core ring with 6 small subunits projecting outwards. Requires adenosylcob(III)alamin as cofactor.

It is found in the bacterial microcompartment. The catalysed reaction is ethanolamine = acetaldehyde + NH4(+). The protein operates within amine and polyamine degradation; ethanolamine degradation. In terms of biological role, catalyzes the deamination of various vicinal amino-alcohols to oxo compounds. Allows this organism to utilize ethanolamine as the sole source of nitrogen and carbon in the presence of external vitamin B12. This is Ethanolamine ammonia-lyase small subunit from Escherichia coli (strain UTI89 / UPEC).